A 293-amino-acid polypeptide reads, in one-letter code: Ribosomal protein L11 methyltransferase (293 aa).

Residues Thr-145, Gly-166, Asp-188, and Asn-230 each coordinate S-adenosyl-L-methionine.

It belongs to the methyltransferase superfamily. PrmA family.

It is found in the cytoplasm. The enzyme catalyses L-lysyl-[protein] + 3 S-adenosyl-L-methionine = N(6),N(6),N(6)-trimethyl-L-lysyl-[protein] + 3 S-adenosyl-L-homocysteine + 3 H(+). In terms of biological role, methylates ribosomal protein L11. The protein is Ribosomal protein L11 methyltransferase of Klebsiella pneumoniae subsp. pneumoniae (strain ATCC 700721 / MGH 78578).